Consider the following 188-residue polypeptide: SAYSvFN domain-containing protein 1 (188 aa).

Residues 1–10 (MEQRLAEFRE) show a composition bias toward basic and acidic residues. Disordered regions lie at residues 1–43 (MEQR…ATPK) and 60–80 (AIAQ…PEST). Residues 1–100 (MEQRLAEFRE…SFLTNITFLK (100 aa)) are Cytoplasmic-facing. 2 stretches are compositionally biased toward low complexity: residues 22-43 (STSS…ATPK) and 60-75 (AIAQ…AGQQ). A middle helical (MH) region spans residues 86–100 (SSCRQSFLTNITFLK). Residues 101–121 (VLLWLVLLGLFVELEFGLAYF) constitute an intramembrane region (helical). Topologically, residues 122–188 (VLSMFYWMYV…RTSPSCSSYP (67 aa)) are cytoplasmic.

The protein belongs to the SAYSD1 family. Associates (via N-terminus) with ribosomes. Enriched in testis; predominantly expressed in round and elongating spermatids.

It is found in the endoplasmic reticulum membrane. Its subcellular location is the cytoplasmic vesicle membrane. Its function is as follows. Ufmylation 'reader' component of a translocation-associated quality control pathway, a mechanism that takes place when a ribosome has stalled during translation, and which is required to degrade clogged substrates. Specifically recognizes and binds ufmylated ribosomes when a ribosome has stalled, promoting the transport of stalled nascent chain via the TRAPP complex to lysosomes for degradation. The polypeptide is SAYSvFN domain-containing protein 1 (Mus musculus (Mouse)).